The primary structure comprises 320 residues: Ferrochelatase (320 aa).

Fe cation contacts are provided by His194 and Glu272.

The protein belongs to the ferrochelatase family.

It is found in the cytoplasm. The enzyme catalyses heme b + 2 H(+) = protoporphyrin IX + Fe(2+). The protein operates within porphyrin-containing compound metabolism; protoheme biosynthesis; protoheme from protoporphyrin-IX: step 1/1. Catalyzes the ferrous insertion into protoporphyrin IX. This is Ferrochelatase from Desulfotalea psychrophila (strain LSv54 / DSM 12343).